The chain runs to 581 residues: MRFSQLYAPTLKEAPSDADLVSIKLLIRGGFVRKNAAGVYTYLPLGLRVLKKVEQIVREEMAAIGCQEILMPIIQPAELWFESGRWDDYGPEMMKFKDRHERDFTLGPTHEELLTSIVRNELRSYRQFPLSLFQIANKYRDEIRPRFGLIRAREFLMKDAYSFHTDWESLDKAYKDFYKAYGRIMERIGLKYLVVEADTGAIGGDESHEFNALADTGESTLLYCDCGYAASDEKAEYMMLSDEDPDVQEEKALELVETPGVRTVQEVADFLKVTPEQIVKSLLYRGKEGFVMALIRGDQELNESKLKAHLKDQTLTMATLEEVLENFGVPIGFIGPVGMNDKVKIVADFTVKPLRNFVVGGMKEGYHYKGVCLGRDFSVDEWFDLKLAVEGDPCPKCGKPMKMTKGIELGHIFKLGTKYSEKMNGYFTDENGENHPYIMGCYGWGISRTMSAVVEQMHDEHGMIWPLSIAPFHIIITMVNPSQEQISKVGEELYELLKEKYEVLLDDRQASPGVKFKDADLIGIPLRITVGKKLTKGLIELKLRTEKQLVEVSISEGYDSVLETVEKLLKKYDPAKVAEVD.

It belongs to the class-II aminoacyl-tRNA synthetase family. ProS type 1 subfamily. Homodimer.

The protein localises to the cytoplasm. It carries out the reaction tRNA(Pro) + L-proline + ATP = L-prolyl-tRNA(Pro) + AMP + diphosphate. Functionally, catalyzes the attachment of proline to tRNA(Pro) in a two-step reaction: proline is first activated by ATP to form Pro-AMP and then transferred to the acceptor end of tRNA(Pro). As ProRS can inadvertently accommodate and process non-cognate amino acids such as alanine and cysteine, to avoid such errors it has two additional distinct editing activities against alanine. One activity is designated as 'pretransfer' editing and involves the tRNA(Pro)-independent hydrolysis of activated Ala-AMP. The other activity is designated 'posttransfer' editing and involves deacylation of mischarged Ala-tRNA(Pro). The misacylated Cys-tRNA(Pro) is not edited by ProRS. The chain is Proline--tRNA ligase from Kosmotoga olearia (strain ATCC BAA-1733 / DSM 21960 / TBF 19.5.1).